The following is a 268-amino-acid chain: MINDNVHLGHRARKRFGQNFLHDQYTIDSIVSAIAPRQNDVMVEIGPGLGALTEPVCDQIDKLHVVELDRDLAARLREHPRLKDKLIVHEADAMKFNFDELAQPGRPLRIFGNLPYNISTPLIFHLLEKSQYITDMYFMLQKEVVERLAAGPNSKDYGRLTVMTQYYCQVMPVLEVGPHAFKPAPKVNSAVVRLAPWKKRPYEALNIADLQRVCQEGFGQRRKTIRNTFRSFITAEQLEEIDINPNLRPENLTLAQFVSIANWLTTHR.

Asparagine 19, leucine 21, glycine 46, glutamate 67, aspartate 92, and asparagine 113 together coordinate S-adenosyl-L-methionine.

This sequence belongs to the class I-like SAM-binding methyltransferase superfamily. rRNA adenine N(6)-methyltransferase family. RsmA subfamily.

The protein resides in the cytoplasm. It catalyses the reaction adenosine(1518)/adenosine(1519) in 16S rRNA + 4 S-adenosyl-L-methionine = N(6)-dimethyladenosine(1518)/N(6)-dimethyladenosine(1519) in 16S rRNA + 4 S-adenosyl-L-homocysteine + 4 H(+). Specifically dimethylates two adjacent adenosines (A1518 and A1519) in the loop of a conserved hairpin near the 3'-end of 16S rRNA in the 30S particle. May play a critical role in biogenesis of 30S subunits. In Tolumonas auensis (strain DSM 9187 / NBRC 110442 / TA 4), this protein is Ribosomal RNA small subunit methyltransferase A.